Reading from the N-terminus, the 422-residue chain is Zinc finger protein Gfi-1 (422 aa).

The SNAG domain stretch occupies residues 1 to 20 (MPRSFLVKSKKAHSYHQPRS). The segment at 1 to 109 (MPRSFLVKSK…ASEKSMCPSL (109 aa)) is disordered. Phosphoserine is present on residues S20 and S56. A required for interaction with RELA region spans residues 140–257 (RPCGALERGA…LLLGGGSYKC (118 aa)). 6 C2H2-type zinc fingers span residues 255–278 (YKCI…RRSH), 284–306 (FACE…KAVH), 312–334 (FDCK…LLIH), 340–362 (YPCQ…TFIH), 368–390 (HKCQ…SRKH), and 396–419 (FGCD…ETQH).

In terms of assembly, interacts with U2AF1L4. Component of RCOR-GFI-KDM1A-HDAC complexes. Interacts directly with RCOR1, KDM1A and HDAC2. Also interacts with HDAC1. Interacts (via the zinc-finger domain) with ARIH2; the interaction prevents GFI1 ubiquitination and proteasomal degradation. Interacts with PIAS3; the interaction relieves the inhibitory effect of PIAS3 on STAT3-mediated transcriptional activity. Forms a complex with EHMT2 and HDAC1 to promote 'Lys-9' dimethylation of H3 (H3K9Me2) and repress expression of target genes. Interacts directly with EHMT2. Component of the GFI1-AJUBA-HDAC1 repressor complex. Interacts directly with AJUBA (via ITS LIM domains); the interaction results in the HDAC-dependent corepression of a subset of GFI1 target genes and, occurs independently of the SNAG domain. Interacts with SPI1; the interaction inhibits SPI1 transcriptional activity targeted at macrophage-specific genes, repressing macrophage differentiation of myeloid progenitor cells and promoting granulocyte commitment. Interacts with RUNX1T1; the interaction represses HDAC-mediated transcriptional activity. Interacts with RELA; the interaction occurs on liposaccharide (LPS) stimulation and controls RELA DNA binding activity and regulates endotoxin-mediated TOLL-like receptor inflammatory response. Interacts (via the C-terminal zinc fingers) with ZBTB17; the interaction results in the recruitment of GFI1 to the CDKN1A/p21 and CDKN1B promoters and repression of transcription. Ubiquitinated. Ubiquitination and degradation by the proteasome is inhibited by the ubiquitin ligase, ARIH2.

The protein localises to the nucleus. Functionally, transcription repressor essential for hematopoiesis. Functions in a cell-context and development-specific manner. Binds to 5'-TAAATCAC[AT]GCA-3' in the promoter region of a large number of genes. Component of several complexes, including the EHMT2-GFI1-HDAC1, AJUBA-GFI1-HDAC1 and RCOR-GFI-KDM1A-HDAC complexes, that suppress, via histone deacetylase (HDAC) recruitment, a number of genes implicated in multilineage blood cell development. Regulates neutrophil differentiation, promotes proliferation of lymphoid cells, and is required for granulocyte development. Inhibits SPI1 transcriptional activity at macrophage-specific genes, repressing macrophage differentiation of myeloid progenitor cells and promoting granulocyte commitment. Mediates, together with U2AF1L4, the alternative splicing of CD45 and controls T-cell receptor signaling. Regulates the endotoxin-mediated Toll-like receptor (TLR) inflammatory response by antagonizing RELA. Cooperates with CBFA2T2 to regulate ITGB1-dependent neurite growth. Controls cell-cycle progression by repressing CDKNIA/p21 transcription in response to TGFB1 via recruitment of GFI1 by ZBTB17 to the CDKNIA/p21 and CDKNIB promoters. Required for the maintenance of inner ear hair cells. In addition to its role in transcription, acts as a substrate adapter for PRMT1 in the DNA damage response: facilitates the recognition of TP53BP1 and MRE11 substrates by PRMT1, promoting their methylation and the DNA damage response. The polypeptide is Zinc finger protein Gfi-1 (GFI1) (Homo sapiens (Human)).